The primary structure comprises 252 residues: Imidazole glycerol phosphate synthase subunit HisF (252 aa).

Active-site residues include D11 and D130.

It belongs to the HisA/HisF family. As to quaternary structure, heterodimer of HisH and HisF.

It is found in the cytoplasm. The catalysed reaction is 5-[(5-phospho-1-deoxy-D-ribulos-1-ylimino)methylamino]-1-(5-phospho-beta-D-ribosyl)imidazole-4-carboxamide + L-glutamine = D-erythro-1-(imidazol-4-yl)glycerol 3-phosphate + 5-amino-1-(5-phospho-beta-D-ribosyl)imidazole-4-carboxamide + L-glutamate + H(+). Its pathway is amino-acid biosynthesis; L-histidine biosynthesis; L-histidine from 5-phospho-alpha-D-ribose 1-diphosphate: step 5/9. In terms of biological role, IGPS catalyzes the conversion of PRFAR and glutamine to IGP, AICAR and glutamate. The HisF subunit catalyzes the cyclization activity that produces IGP and AICAR from PRFAR using the ammonia provided by the HisH subunit. The protein is Imidazole glycerol phosphate synthase subunit HisF of Lacticaseibacillus casei (strain BL23) (Lactobacillus casei).